A 146-amino-acid polypeptide reads, in one-letter code: MGRFIFGSFGLLVLFLSLSGTGADCPSDWSSYDLYCYKVFQQRMNWEDAEQFCRQQHTGSHLLSFHSSEEVDFVVSKTLPILKADFVWIGLTDVWSACRLQWSDGTELKYNAWTAESECIASKTTDNQWWTRSCSRTYPFVCKLEV.

The signal sequence occupies residues 1–23 (MGRFIFGSFGLLVLFLSLSGTGA). The C-type lectin domain occupies 24–143 (DCPSDWSSYD…CSRTYPFVCK (120 aa)). 3 disulfides stabilise this stretch: Cys25–Cys36, Cys53–Cys142, and Cys119–Cys134.

It belongs to the snaclec family. As to quaternary structure, heterodimer of subunits alpha and beta; disulfide-linked. Expressed by the venom gland.

The protein localises to the secreted. In terms of biological role, weakly agglutinates platelets at high doses by binding to GPIbalpha (GP1BA). This chain is Snaclec alboaggregin-B subunit beta, found in Trimeresurus albolabris (White-lipped pit viper).